Here is a 59-residue protein sequence, read N- to C-terminus: Lantipeptide Flvbeta.f (59 aa).

A propeptide spans 1–27 (MEKMNNIAGITPENELDEMFDDSVVGA) (cleaved by FlvT). 2 positions are modified to 2,3-didehydrobutyrine; by FlvM2: threonine 31 and threonine 32. 2 cross-links (beta-methyllanthionine (Thr-Cys); by FlvM2) span residues 41 to 47 (TKNPQIC) and 53 to 56 (TVKC).

Post-translationally, contains DL-beta-methyllanthionine, when coepressed in E.coli with the flavecin synthetase FlvM2.

Its subcellular location is the secreted. Its function is as follows. Lanthionine-containing peptide that does probably not show antibacterial activity, since its analog [+7]Flvbeta.f does not show antibacterial activity against M.luteus. Also does not show antibiotic activity when tested with [Del2]Flvalpha.a, an analog of Flvalpha.a, which is encoded by the same operon than Flvbeta.f. The bactericidal activity of lantibiotics is based on depolarization of energized bacterial cytoplasmic membranes, initiated by the formation of aqueous transmembrane pores. The protein is Lantipeptide Flvbeta.f of Ruminococcus flavefaciens.